The chain runs to 888 residues: Glutamate receptor 3 (888 aa).

The signal sequence occupies residues 1-22; it reads MGQSVLRAVFFLVLGLLGHSHG. The Extracellular portion of the chain corresponds to 23-546; sequence GFPNTISIGG…GVFSFLDPLA (524 aa). N-linked (GlcNAc...) asparagine glycosylation is found at asparagine 57, asparagine 260, asparagine 374, asparagine 409, and asparagine 416. Cysteine 85 and cysteine 334 are joined by a disulfide. Residues proline 502, threonine 504, and arginine 509 each coordinate L-glutamate. The chain crosses the membrane as a helical span at residues 547 to 567; the sequence is YEIWMCIVFAYIGVSVVLFLV. Topologically, residues 568 to 596 are cytoplasmic; it reads SRFSPYEWHLEDNNEEPRDPQSPPDPPNE. The helical; Pore-forming intramembrane region spans 597 to 612; that stretch reads FGIFNSLWFSLGAFMQ. An intramembrane segment occupies 613 to 615; the sequence is QGC. Cysteine 615 carries the S-palmitoyl cysteine lipid modification. Residues 616–621 are Cytoplasmic-facing; that stretch reads DISPRS. Residues 622 to 642 form a helical membrane-spanning segment; sequence LSGRIVGGVWWFFTLIIISSY. The Extracellular segment spans residues 643-817; it reads TANLAAFLTV…DKTSALSLSN (175 aa). Residues serine 680, threonine 681, and glutamate 731 each coordinate L-glutamate. Cysteine 744 and cysteine 799 are disulfide-bonded. The helical transmembrane segment at 818-838 threads the bilayer; the sequence is VAGVFYILVGGLGLAMMVALI. Topologically, residues 839-888 are cytoplasmic; it reads EFCYKSRAESKRMKLTKNTQNFKPAPATNTQNYATYREGYNVYGTESVKI. The S-palmitoyl cysteine moiety is linked to residue cysteine 841. Phosphotyrosine occurs at positions 871 and 881.

It belongs to the glutamate-gated ion channel (TC 1.A.10.1) family. GRIA3 subfamily. As to quaternary structure, homotetramer or heterotetramer of pore-forming glutamate receptor subunits. Tetramers may be formed by the dimerization of dimers. Interacts with PICK1, GRIP1 and GRIP2. Found in a complex with GRIA1, GRIA2, GRIA4, CNIH2, CNIH3, CACNG2, CACNG3, CACNG4, CACNG5, CACNG7 and CACNG8. Interacts with CACNG5. Found in a complex with GRIA1, GRIA2, GRIA4, DLG4, CACNG8 and CNIH2.

Its subcellular location is the cell membrane. It localises to the postsynaptic cell membrane. It is found in the postsynaptic density membrane. The catalysed reaction is Ca(2+)(in) = Ca(2+)(out). In terms of biological role, ionotropic glutamate receptor that functions as a ligand-gated cation channel, gated by L-glutamate and glutamatergic agonists such as alpha-amino-3-hydroxy-5-methyl-4-isoxazolepropionic acid (AMPA), quisqualic acid, and kainic acid. L-glutamate acts as an excitatory neurotransmitter at many synapses in the central nervous system and plays an important role in fast excitatory synaptic transmission by inducing long-term potentiation. Binding of the excitatory neurotransmitter L-glutamate induces a conformation change, leading to the opening of the cation channel, and thereby converts the chemical signal to an electrical impulse upon entry of calcium. The receptor then desensitizes rapidly and enters a transient inactive state, characterized by the presence of bound agonist. In the presence of CACNG8, shows resensitization which is characterized by a delayed accumulation of current flux upon continued application of glutamate. This Mus musculus (Mouse) protein is Glutamate receptor 3.